An 88-amino-acid chain; its full sequence is UPF0250 protein Shewmr4_0986 (88 aa).

This sequence belongs to the UPF0250 family.

This chain is UPF0250 protein Shewmr4_0986, found in Shewanella sp. (strain MR-4).